Consider the following 432-residue polypeptide: Ornithine decarboxylase (432 aa).

Lys98 is modified (N6-(pyridoxal phosphate)lysine). Residues Ser229, Gly266, and 296 to 299 (EPGR) each bind pyridoxal 5'-phosphate. Residue 341–342 (FD) participates in substrate binding. Catalysis depends on Cys377, which acts as the Proton donor; shared with dimeric partner. Asp378 serves as a coordination point for substrate. Residue Tyr407 participates in pyridoxal 5'-phosphate binding.

This sequence belongs to the Orn/Lys/Arg decarboxylase class-II family. In terms of assembly, homodimer. Only the dimer is catalytically active, as the active sites are constructed of residues from both monomers. Requires pyridoxal 5'-phosphate as cofactor.

It localises to the cytoplasm. It catalyses the reaction L-ornithine + H(+) = putrescine + CO2. It functions in the pathway amine and polyamine biosynthesis; putrescine biosynthesis via L-ornithine pathway; putrescine from L-ornithine: step 1/1. With respect to regulation, inhibited by antizyme (AZ) OAZ1 in response to polyamine levels. AZ inhibits the assembly of the functional homodimer by binding to ODC monomers and targeting them for ubiquitin-independent proteolytic destruction by the 26S proteasome. Functionally, catalyzes the first and rate-limiting step of polyamine biosynthesis that converts ornithine into putrescine, which is the precursor for the polyamines, spermidine and spermine. Polyamines are essential for cell proliferation and are implicated in cellular processes, ranging from DNA replication to apoptosis. The polypeptide is Ornithine decarboxylase (spe1) (Schizosaccharomyces pombe (strain 972 / ATCC 24843) (Fission yeast)).